The primary structure comprises 434 residues: Methylenetetrahydrofolate--tRNA-(uracil-5-)-methyltransferase TrmFO (434 aa).

FAD is bound at residue Gly9–Gly14.

The protein belongs to the MnmG family. TrmFO subfamily. FAD serves as cofactor.

The protein localises to the cytoplasm. The catalysed reaction is uridine(54) in tRNA + (6R)-5,10-methylene-5,6,7,8-tetrahydrofolate + NADH + H(+) = 5-methyluridine(54) in tRNA + (6S)-5,6,7,8-tetrahydrofolate + NAD(+). The enzyme catalyses uridine(54) in tRNA + (6R)-5,10-methylene-5,6,7,8-tetrahydrofolate + NADPH + H(+) = 5-methyluridine(54) in tRNA + (6S)-5,6,7,8-tetrahydrofolate + NADP(+). Functionally, catalyzes the folate-dependent formation of 5-methyl-uridine at position 54 (M-5-U54) in all tRNAs. The protein is Methylenetetrahydrofolate--tRNA-(uracil-5-)-methyltransferase TrmFO of Listeria welshimeri serovar 6b (strain ATCC 35897 / DSM 20650 / CCUG 15529 / CIP 8149 / NCTC 11857 / SLCC 5334 / V8).